Here is a 163-residue protein sequence, read N- to C-terminus: Ribosome maturation factor RimP (163 aa).

This sequence belongs to the RimP family.

The protein localises to the cytoplasm. Functionally, required for maturation of 30S ribosomal subunits. In Polynucleobacter necessarius subsp. necessarius (strain STIR1), this protein is Ribosome maturation factor RimP.